We begin with the raw amino-acid sequence, 164 residues long: Serine/arginine-rich splicing factor 3 (164 aa).

Met1 is subject to N-acetylmethionine. A sufficient for interaction with NXF1 and SRSP region spans residues 1–90 (MHRDSCPLDC…SNGEKRSRNR (90 aa)). Ser5 bears the Phosphoserine mark. The 74-residue stretch at 10 to 83 (CKVYVGNLGN…CRVRVELSNG (74 aa)) folds into the RRM domain. Residue Lys23 is modified to N6-acetyllysine. Positions 81–164 (SNGEKRSRNR…RSRSRSNERK (84 aa)) are disordered. Residues 107 to 128 (RSPPPRRRSPRRRSFSRSRSRS) show a composition bias toward basic residues. The stretch at 119-133 (RSFSRSRSRSLSRDR) is one B-1 repeat. The segment at 119-164 (RSFSRSRSRSLSRDRRRERSLSRERNHKPSRSFSRSRSRSRSNERK) is 2 X approximate repeats, basic. Residues 129–142 (LSRDRRRERSLSRE) are compositionally biased toward basic and acidic residues. Residues 143–158 (RNHKPSRSFSRSRSRS) show a composition bias toward basic residues. Residues 149–164 (RSFSRSRSRSRSNERK) form a B-2 repeat.

The protein belongs to the splicing factor SR family. As to quaternary structure, interacts with CPSF6. Interacts with RBMY1A1. Interacts with SREK1/SFRS12. Interacts with NXF1. Interacts with YTHDC1, leading to recruitment to RNA elements adjacent to m6A sites. Interacts with SRSP; increases SRSF3 binding to specific exons. In terms of processing, phosphorylated by CLK1, CLK2, CLK3 and CLK4. Extensively phosphorylated on serine residues in the RS domain.

It is found in the nucleus. The protein localises to the nucleus speckle. It localises to the cytoplasm. Splicing factor, which binds the consensus motif 5'-C[ACU][AU]C[ACU][AC]C-3' within pre-mRNA and promotes specific exons inclusion during alternative splicing. Interaction with YTHDC1, a RNA-binding protein that recognizes and binds N6-methyladenosine (m6A)-containing RNAs, promotes recruitment of SRSF3 to its mRNA-binding elements adjacent to m6A sites within exons. Also functions as an adapter involved in mRNA nuclear export. Binds mRNA which is thought to be transferred to the NXF1-NXT1 heterodimer for export (TAP/NXF1 pathway); enhances NXF1-NXT1 RNA-binding activity. Involved in nuclear export of m6A-containing mRNAs via interaction with YTHDC1: interaction with YTHDC1 facilitates m6A-containing mRNA-binding to both SRSF3 and NXF1, promoting mRNA nuclear export. In Bos taurus (Bovine), this protein is Serine/arginine-rich splicing factor 3 (SRSF3).